Here is an 873-residue protein sequence, read N- to C-terminus: Actin-related protein 8 (873 aa).

Positions Asp108–Lys129 are disordered. The span at Thr114–Thr123 shows a compositional bias: low complexity. Asp368–His371 is an ATP binding site. A compositionally biased stretch (low complexity) spans Asn596–Asn650. The tract at residues Asn596 to Ile701 is disordered. Residues Val651 to Leu668 are compositionally biased toward polar residues. Low complexity predominate over residues Asn669–Thr696. The stretch at Phe762–Thr804 forms a coiled coil.

This sequence belongs to the actin family. ARP8 subfamily. Component of the chromatin remodeling INO80 complex. Exists as monomers and dimers, but the dimer is most probably the biologically relevant form required for stable interactions with histones that exploits the twofold symmetry of the nucleosome core.

Its subcellular location is the nucleus. It is found in the cytoplasm. The protein localises to the cytoskeleton. Functionally, plays an important role in the functional organization of mitotic chromosomes. Exhibits low basal ATPase activity, and unable to polymerize. Its function is as follows. Proposed core component of the chromatin remodeling INO80 complex which is involved in transcriptional regulation, DNA replication and probably DNA repair. Strongly prefer nucleosomes and H3-H4 tetramers over H2A-H2B dimers, suggesting it may act as a nucleosome recognition module within the complex. The protein is Actin-related protein 8 of Dictyostelium discoideum (Social amoeba).